The sequence spans 535 residues: Ribonuclease Y (535 aa).

The helical transmembrane segment at 4–24 threads the bilayer; it reads IILAMVCALIGLIIGYVAISM. Positions 107–145 are disordered; sequence TDRASSLDRKDENLSNKEKMLDSKEQSLTDKSRHINERE. The KH domain maps to 225–285; that stretch reads TITTVHLPDD…IRREIARMTL (61 aa). The 94-residue stretch at 351–444 folds into the HD domain; the sequence is VLRHSVEVGK…VAAADALSSA (94 aa).

This sequence belongs to the RNase Y family.

The protein localises to the cell membrane. Its function is as follows. Endoribonuclease that initiates mRNA decay. The polypeptide is Ribonuclease Y (Streptococcus agalactiae serotype Ia (strain ATCC 27591 / A909 / CDC SS700)).